Consider the following 310-residue polypeptide: ATP phosphoribosyltransferase (310 aa).

It belongs to the ATP phosphoribosyltransferase family.

Its subcellular location is the cytoplasm. The catalysed reaction is 1-(5-phospho-beta-D-ribosyl)-ATP + diphosphate = 5-phospho-alpha-D-ribose 1-diphosphate + ATP. Its pathway is amino-acid biosynthesis; L-histidine biosynthesis; L-histidine from 5-phospho-alpha-D-ribose 1-diphosphate: step 1/9. Catalyzes the condensation of ATP and 5-phosphoribose 1-diphosphate to form N'-(5'-phosphoribosyl)-ATP (PR-ATP). Has a crucial role in the pathway because the rate of histidine biosynthesis seems to be controlled primarily by regulation of HisG enzymatic activity. The polypeptide is ATP phosphoribosyltransferase (his1) (Schizosaccharomyces pombe (strain 972 / ATCC 24843) (Fission yeast)).